The following is a 290-amino-acid chain: Bifunctional protein FolD (290 aa).

NADP(+) is bound by residues 166–168, serine 191, and isoleucine 232; that span reads GQS.

It belongs to the tetrahydrofolate dehydrogenase/cyclohydrolase family. Homodimer.

The catalysed reaction is (6R)-5,10-methylene-5,6,7,8-tetrahydrofolate + NADP(+) = (6R)-5,10-methenyltetrahydrofolate + NADPH. The enzyme catalyses (6R)-5,10-methenyltetrahydrofolate + H2O = (6R)-10-formyltetrahydrofolate + H(+). Its pathway is one-carbon metabolism; tetrahydrofolate interconversion. Functionally, catalyzes the oxidation of 5,10-methylenetetrahydrofolate to 5,10-methenyltetrahydrofolate and then the hydrolysis of 5,10-methenyltetrahydrofolate to 10-formyltetrahydrofolate. This is Bifunctional protein FolD from Halorhodospira halophila (strain DSM 244 / SL1) (Ectothiorhodospira halophila (strain DSM 244 / SL1)).